The sequence spans 133 residues: MAENLRLEVVTPEKTVVSDDAQIVMAPGVLGEFGVLVNHTPFLTSLMPGALHYKDTGEKEHLLFVSDGFAEVLPDRITVLVESAERKEDIDLQRAEAARERAEKRLESGEDVDFVRAKAALTRAIQRIRVAGA.

Belongs to the ATPase epsilon chain family. As to quaternary structure, F-type ATPases have 2 components, CF(1) - the catalytic core - and CF(0) - the membrane proton channel. CF(1) has five subunits: alpha(3), beta(3), gamma(1), delta(1), epsilon(1). CF(0) has three main subunits: a, b and c.

It is found in the cell inner membrane. Its function is as follows. Produces ATP from ADP in the presence of a proton gradient across the membrane. In Desulfosudis oleivorans (strain DSM 6200 / JCM 39069 / Hxd3) (Desulfococcus oleovorans), this protein is ATP synthase epsilon chain.